Reading from the N-terminus, the 303-residue chain is Diaminopimelate epimerase (303 aa).

Positions 15 and 72 each coordinate substrate. Cysteine 81 functions as the Proton donor in the catalytic mechanism. Substrate-binding positions include 82 to 83 (GN), asparagine 169, asparagine 202, and 220 to 221 (ER). Cysteine 229 (proton acceptor) is an active-site residue. 230-231 (GT) lines the substrate pocket.

It belongs to the diaminopimelate epimerase family. In terms of assembly, homodimer.

The protein resides in the cytoplasm. It carries out the reaction (2S,6S)-2,6-diaminopimelate = meso-2,6-diaminopimelate. Its pathway is amino-acid biosynthesis; L-lysine biosynthesis via DAP pathway; DL-2,6-diaminopimelate from LL-2,6-diaminopimelate: step 1/1. Functionally, catalyzes the stereoinversion of LL-2,6-diaminopimelate (L,L-DAP) to meso-diaminopimelate (meso-DAP), a precursor of L-lysine and an essential component of the bacterial peptidoglycan. The sequence is that of Diaminopimelate epimerase from Prochlorococcus marinus (strain MIT 9313).